The primary structure comprises 381 residues: Cytochrome b (381 aa).

The next 4 helical transmembrane spans lie at 34–54 (FGSLLGLCLIIQILTGLFLAM), 78–99 (WLIRNIHANGASLFFICIYLHI), 114–134 (WNIGVILLFLLMATAFVGYVL), and 179–199 (FFAFHFLLPFLILALTVIHLL). 2 residues coordinate heme b: His84 and His98. The heme b site is built by His183 and His197. His202 contacts a ubiquinone. A run of 4 helical transmembrane segments spans residues 227–247 (YKDLLGFFIMIFFLATLALFM), 289–309 (LGGVLALLFSIFILMLVPLLH), 321–341 (MTQIFFWLLVANFLILTWIGG), and 348–368 (FMMVGQIASISYFALFLIIMP).

Belongs to the cytochrome b family. In terms of assembly, the cytochrome bc1 complex contains 3 respiratory subunits (MT-CYB, CYC1 and UQCRFS1), 2 core proteins (UQCRC1 and UQCRC2) and probably 6 low-molecular weight proteins. Heme b serves as cofactor.

It localises to the mitochondrion inner membrane. Component of the ubiquinol-cytochrome c reductase complex (complex III or cytochrome b-c1 complex) that is part of the mitochondrial respiratory chain. The b-c1 complex mediates electron transfer from ubiquinol to cytochrome c. Contributes to the generation of a proton gradient across the mitochondrial membrane that is then used for ATP synthesis. The sequence is that of Cytochrome b (mt-cyb) from Prionace glauca (Blue shark).